Consider the following 503-residue polypeptide: MLDLTYEAPKPKVIAGAKHDWELVIGMEIHAQVSSNAKLFSGASTTFGAEPNSNVSFVDCAMPGMLPVINEFCVAQAVRTGLGLKAQINLVSAFDRKNYFYPDLPQGYQISQLYHPIVGEGEVLVELAPGIARLVRIERIHLEQDAGKSIHDMDPNLSFVDFNRTGVALMEIVSRPDIRGPEEAAAYVAKLRQILRYLGTCDGNMQNGNLRADVNVSVCRPGQYEKYQETQDFSHLGTRCEIKNMNSMRFIQQAIDYEARRQIAILEDGGKVVQETRLYDPDKGETRSMRSKEEAHDYRYFPDPDLLPLEIEQGWVDEIAASMPELPDAKKARFMADYGVTDYDANVLTAELDAAAYFEEVARGRDGKQAANWVINELFGRLNKQGLTIADPPVKAGQLGGVLDLIASGEISGKMAKDLFEILWTEGGDPAEVAAARGMKQVTDTGAIETAVDEIIAANPAQVEKAKANPKLAGWFVGQVIKATGGKANPAAVNQIVAQKLGL.

The protein belongs to the GatB/GatE family. GatB subfamily. As to quaternary structure, heterotrimer of A, B and C subunits.

It carries out the reaction L-glutamyl-tRNA(Gln) + L-glutamine + ATP + H2O = L-glutaminyl-tRNA(Gln) + L-glutamate + ADP + phosphate + H(+). The catalysed reaction is L-aspartyl-tRNA(Asn) + L-glutamine + ATP + H2O = L-asparaginyl-tRNA(Asn) + L-glutamate + ADP + phosphate + 2 H(+). Allows the formation of correctly charged Asn-tRNA(Asn) or Gln-tRNA(Gln) through the transamidation of misacylated Asp-tRNA(Asn) or Glu-tRNA(Gln) in organisms which lack either or both of asparaginyl-tRNA or glutaminyl-tRNA synthetases. The reaction takes place in the presence of glutamine and ATP through an activated phospho-Asp-tRNA(Asn) or phospho-Glu-tRNA(Gln). This Cereibacter sphaeroides (strain ATCC 17029 / ATH 2.4.9) (Rhodobacter sphaeroides) protein is Aspartyl/glutamyl-tRNA(Asn/Gln) amidotransferase subunit B.